The primary structure comprises 289 residues: Phosphatidylglycerol--prolipoprotein diacylglyceryl transferase (289 aa).

A run of 7 helical transmembrane segments spans residues 23–43 (ALHW…WLAV), 61–81 (LLYM…VLFY), 99–119 (GGMS…WFAH), 125–145 (FFQV…AGRL), 199–219 (SQLY…NLFI), 226–246 (GSVS…TEFF), and 259–279 (LFSM…LMMV). Residue arginine 144 coordinates a 1,2-diacyl-sn-glycero-3-phospho-(1'-sn-glycerol).

The protein belongs to the Lgt family.

It localises to the cell inner membrane. The enzyme catalyses L-cysteinyl-[prolipoprotein] + a 1,2-diacyl-sn-glycero-3-phospho-(1'-sn-glycerol) = an S-1,2-diacyl-sn-glyceryl-L-cysteinyl-[prolipoprotein] + sn-glycerol 1-phosphate + H(+). It functions in the pathway protein modification; lipoprotein biosynthesis (diacylglyceryl transfer). Functionally, catalyzes the transfer of the diacylglyceryl group from phosphatidylglycerol to the sulfhydryl group of the N-terminal cysteine of a prolipoprotein, the first step in the formation of mature lipoproteins. In Pectobacterium atrosepticum (strain SCRI 1043 / ATCC BAA-672) (Erwinia carotovora subsp. atroseptica), this protein is Phosphatidylglycerol--prolipoprotein diacylglyceryl transferase.